Consider the following 96-residue polypeptide: Small ribosomal subunit protein bS6 (96 aa).

This sequence belongs to the bacterial ribosomal protein bS6 family.

Functionally, binds together with bS18 to 16S ribosomal RNA. This chain is Small ribosomal subunit protein bS6, found in Acidothermus cellulolyticus (strain ATCC 43068 / DSM 8971 / 11B).